Reading from the N-terminus, the 391-residue chain is GTPase Obg (391 aa).

The Obg domain occupies 1-159 (MKFIDEALIR…RDLLLELMLL (159 aa)). One can recognise an OBG-type G domain in the interval 160–333 (ADVGMLGLPN…LTRDIMDFIE (174 aa)). GTP-binding positions include 166–173 (GLPNAGKS), 191–195 (FTTLV), 213–216 (DIPG), 283–286 (NKID), and 314–316 (SAA). The Mg(2+) site is built by Ser173 and Thr193.

It belongs to the TRAFAC class OBG-HflX-like GTPase superfamily. OBG GTPase family. In terms of assembly, monomer. Mg(2+) is required as a cofactor.

The protein localises to the cytoplasm. Its function is as follows. An essential GTPase which binds GTP, GDP and possibly (p)ppGpp with moderate affinity, with high nucleotide exchange rates and a fairly low GTP hydrolysis rate. Plays a role in control of the cell cycle, stress response, ribosome biogenesis and in those bacteria that undergo differentiation, in morphogenesis control. The protein is GTPase Obg of Haemophilus ducreyi (strain 35000HP / ATCC 700724).